The sequence spans 602 residues: Probable translation initiation factor IF-2 (602 aa).

In terms of domain architecture, tr-type G spans 18–233 (LRTPIVCVMG…LVGLAQRFLK (216 aa)). Residues 27–34 (GHVDHGKT) are G1. 27–34 (GHVDHGKT) provides a ligand contact to GTP. Residues 52 to 56 (AITQH) form a G2 region. Positions 88–91 (DTPG) are G3. Residues 88-92 (DTPGH) and 142-145 (NKID) each bind GTP. The segment at 142–145 (NKID) is G4. The interval 210 to 212 (SAI) is G5.

The protein belongs to the TRAFAC class translation factor GTPase superfamily. Classic translation factor GTPase family. IF-2 subfamily.

Its function is as follows. Function in general translation initiation by promoting the binding of the formylmethionine-tRNA to ribosomes. Seems to function along with eIF-2. In Methanothrix thermoacetophila (strain DSM 6194 / JCM 14653 / NBRC 101360 / PT) (Methanosaeta thermophila), this protein is Probable translation initiation factor IF-2.